A 377-amino-acid chain; its full sequence is Molybdenum import ATP-binding protein ModC (377 aa).

Residues 4–240 (IAPRSIRGEF…PALPLATARD (237 aa)) form the ABC transporter domain. Position 38–45 (38–45 (GPSGCGKS)) interacts with ATP. The Mop domain occupies 299 to 369 (RTSILNILPA…IKGVALAPER (71 aa)).

The protein belongs to the ABC transporter superfamily. Molybdate importer (TC 3.A.1.8) family. The complex is composed of two ATP-binding proteins (ModC), two transmembrane proteins (ModB) and a solute-binding protein (ModA).

The protein resides in the cell inner membrane. The catalysed reaction is molybdate(out) + ATP + H2O = molybdate(in) + ADP + phosphate + H(+). In terms of biological role, part of the ABC transporter complex ModABC involved in molybdenum import. Responsible for energy coupling to the transport system. The protein is Molybdenum import ATP-binding protein ModC of Rhodopseudomonas palustris (strain HaA2).